A 620-amino-acid chain; its full sequence is Mitochondrial Rho GTPase 2 (620 aa).

At 1–594 the chain is on the cytoplasmic side; it reads MRRDVRILLL…ELHPTSFWLR (594 aa). Residues 2 to 168 enclose the Miro 1 domain; sequence RRDVRILLLG…FYYAQKAVLH (167 aa). GTP-binding residues include Gly-16, Lys-17, Thr-18, and Ser-19. Position 18 (Thr-18) interacts with Mg(2+). Asp-57 lines the Mg(2+) pocket. Ser-59 is a binding site for GTP. Residue Lys-96 forms a Glycyl lysine isopeptide (Lys-Gly) (interchain with G-Cter in ubiquitin) linkage. GTP is bound by residues Asn-118, Lys-119, Asp-121, Ala-149, and Lys-150. Lys-119 participates in a covalent cross-link: Glycyl lysine isopeptide (Lys-Gly) (interchain with G-Cter in ubiquitin). Lys-164 participates in a covalent cross-link: Glycyl lysine isopeptide (Lys-Gly) (interchain with G-Cter in ubiquitin). EF-hand domains follow at residues 184–219 and 304–339; these read ACAQALTRIFRLSDQDRDHGLSDEELNAFQKSCFGH and RGYQFVQRMFEKHDQDHDGVLSPTELQNLFSVFSGA. Ca(2+)-binding residues include Asp-197, Asp-199, Asp-201, Glu-208, Asp-317, Asp-319, Asp-321, and Glu-328. The Miro 2 domain occupies 415–578; it reads RSVLMCKVLG…FTQLATMATF (164 aa). GTP contacts are provided by Gly-427, Gly-429, Lys-430, Ser-431, and Ala-432. Ser-431 contributes to the Mg(2+) binding site. Glu-473 lines the Mg(2+) pocket. GTP is bound by residues Lys-527, Asp-529, and Cys-558. The chain crosses the membrane as a helical; Anchor for type IV membrane protein span at residues 595–617; that stretch reads GVLVAVGTAVAAVLSFSLYRVLV. The Mitochondrial intermembrane segment spans residues 618–620; the sequence is KSR.

It belongs to the mitochondrial Rho GTPase family. In terms of assembly, homodimer. Interacts with the kinesin-binding proteins TRAK1/OIP106 and TRAK2/GRIF1, forming a link between mitochondria and the trafficking apparatus of the microtubules. Interacts with ARMCX3. Found in a complex with KIF5B, OGT, RHOT1 and TRAK1. In terms of processing, ubiquitinated by PRKN in a PINK1-dependent manner, leading to its degradation. In terms of tissue distribution, ubiquitously expressed.

The protein localises to the mitochondrion outer membrane. The catalysed reaction is GTP + H2O = GDP + phosphate + H(+). It carries out the reaction ATP + H2O = ADP + phosphate + H(+). It catalyses the reaction UTP + H2O = UDP + phosphate + H(+). Its function is as follows. Atypical mitochondrial nucleoside-triphosphatase (NTPase) involved in mitochondrial trafficking. Probably involved in control of anterograde transport of mitochondria and their subcellular distribution. Can hydrolyze GTP, ATP and UTP. This Mus musculus (Mouse) protein is Mitochondrial Rho GTPase 2 (Rhot2).